Consider the following 39-residue polypeptide: Anthranilate phosphoribosyltransferase (39 aa).

This sequence belongs to the anthranilate phosphoribosyltransferase family. As to quaternary structure, homodimer.

It carries out the reaction N-(5-phospho-beta-D-ribosyl)anthranilate + diphosphate = 5-phospho-alpha-D-ribose 1-diphosphate + anthranilate. Its pathway is amino-acid biosynthesis; L-tryptophan biosynthesis; L-tryptophan from chorismate: step 2/5. Catalyzes the transfer of the phosphoribosyl group of 5-phosphorylribose-1-pyrophosphate (PRPP) to anthranilate to yield N-(5'-phosphoribosyl)-anthranilate (PRA). The polypeptide is Anthranilate phosphoribosyltransferase (trpD) (Pectobacterium carotovorum (Erwinia carotovora)).